A 513-amino-acid chain; its full sequence is E3 ubiquitin-protein ligase XBAT33 (513 aa).

ANK repeat units lie at residues Gly-44–Ser-73, Cys-77–Arg-106, Ala-111–Lys-140, Gly-171–Ala-200, and Ala-214–Leu-244. The RING-type zinc-finger motif lies at Cys-312 to Arg-362. Disordered stretches follow at residues Asp-397–Arg-417 and His-455–Gln-483. Basic and acidic residues-rich tracts occupy residues His-455 to Glu-466 and Thr-474 to Gln-483.

It carries out the reaction S-ubiquitinyl-[E2 ubiquitin-conjugating enzyme]-L-cysteine + [acceptor protein]-L-lysine = [E2 ubiquitin-conjugating enzyme]-L-cysteine + N(6)-ubiquitinyl-[acceptor protein]-L-lysine.. Its pathway is protein modification; protein ubiquitination. Its function is as follows. Possesses E3 ubiquitin-protein ligase activity when associated with the E2 enzyme UBC8 in vitro. This is E3 ubiquitin-protein ligase XBAT33 (XBAT33) from Arabidopsis thaliana (Mouse-ear cress).